A 166-amino-acid chain; its full sequence is 3-isopropylmalate dehydratase small subunit 2 (166 aa).

It belongs to the LeuD family. LeuD type 2 subfamily. In terms of assembly, heterodimer of LeuC and LeuD.

The enzyme catalyses (2R,3S)-3-isopropylmalate = (2S)-2-isopropylmalate. Its pathway is amino-acid biosynthesis; L-leucine biosynthesis; L-leucine from 3-methyl-2-oxobutanoate: step 2/4. Catalyzes the isomerization between 2-isopropylmalate and 3-isopropylmalate, via the formation of 2-isopropylmaleate. This is 3-isopropylmalate dehydratase small subunit 2 (leuD2) from Thermotoga maritima (strain ATCC 43589 / DSM 3109 / JCM 10099 / NBRC 100826 / MSB8).